We begin with the raw amino-acid sequence, 602 residues long: Potassium-transporting ATPase potassium-binding subunit (602 aa).

A run of 10 helical transmembrane segments spans residues 3 to 23 (ANNL…AVPV), 64 to 84 (QYAL…YALL), 135 to 155 (GLTV…LALI), 178 to 198 (LYVL…QGVI), 282 to 302 (FSNF…CLVF), 313 to 333 (VAVL…ETSA), 418 to 438 (GLYG…LMIG), 456 to 476 (VSIV…IAVL), 522 to 542 (WMTA…VLAI), and 565 to 585 (LFVV…YMPA).

It belongs to the KdpA family. In terms of assembly, the system is composed of three essential subunits: KdpA, KdpB and KdpC.

The protein resides in the cell inner membrane. In terms of biological role, part of the high-affinity ATP-driven potassium transport (or Kdp) system, which catalyzes the hydrolysis of ATP coupled with the electrogenic transport of potassium into the cytoplasm. This subunit binds the periplasmic potassium ions and delivers the ions to the membrane domain of KdpB through an intramembrane tunnel. This Burkholderia mallei (strain ATCC 23344) protein is Potassium-transporting ATPase potassium-binding subunit.